The following is a 131-amino-acid chain: MSMSDPIADMLTRIRNAQMVEKAVVLVPSSKVKVAIAQVLKDEGYIDGFSVKTDDGKSQLEIALKYYAGRPVIERIERVSRPGLRVYKGHGAIPQVMNGLGVAIVTTPQGVMTDRKARATGIGGEVLCYVA.

This sequence belongs to the universal ribosomal protein uS8 family. In terms of assembly, part of the 30S ribosomal subunit. Contacts proteins S5 and S12.

One of the primary rRNA binding proteins, it binds directly to 16S rRNA central domain where it helps coordinate assembly of the platform of the 30S subunit. The protein is Small ribosomal subunit protein uS8 of Polaromonas sp. (strain JS666 / ATCC BAA-500).